We begin with the raw amino-acid sequence, 384 residues long: MGIHKLMDLLKEKAPGCIKTSDLKFYAGRMIACDASMAMYQFLATTSSASDFQIQNLTDKDGNKTGHLVGLLNRTVMLIENGLKPVWVFDGKPPQFKSGELARRQKAKDEAAEKQKTAIETGDMQEALKQEQRNLHITKEMKADAIKLLQLVGVPVILAPCEAEAQCAALAKAKKVFATVTEDMDALTFATPFLLRNLNSKKEPITEINYEKMLQELKLSHNEFVDLCILCGCDYLGRIEGVGPVNAFKLITEHKSLEKVLEHMEEVNKQSTKKQKYTVPSSYDYVSARDLFINPEVTDPETIQLEWKKPDVEELKKFLVEEKGFSEQRVTSQMEKVLNAKEHKGSQTRLNDFFKVQPKDTSSTSKASKKPTNTKSANKKGGKK.

Positions 1 to 108 are N-domain; the sequence is MGIHKLMDLL…GELARRQKAK (108 aa). Residue Asp-34 coordinates Mg(2+). Arg-74 lines the DNA pocket. 5 residues coordinate Mg(2+): Asp-90, Glu-162, Glu-164, Asp-183, and Asp-185. The I-domain stretch occupies residues 126–254; that stretch reads EALKQEQRNL…VNAFKLITEH (129 aa). Residue Glu-162 coordinates DNA. 2 residues coordinate DNA: Gly-232 and Asp-234. Asp-234 contacts Mg(2+). The tract at residues 340-384 is disordered; sequence AKEHKGSQTRLNDFFKVQPKDTSSTSKASKKPTNTKSANKKGGKK. Positions 346-354 are interaction with PCNA; sequence SQTRLNDFF. Over residues 359–376 the composition is skewed to low complexity; it reads KDTSSTSKASKKPTNTKS.

This sequence belongs to the XPG/RAD2 endonuclease family. FEN1 subfamily. In terms of assembly, interacts with PCNA. Three molecules of FEN1 bind to one PCNA trimer with each molecule binding to one PCNA monomer. PCNA stimulates the nuclease activity without altering cleavage specificity. Mg(2+) is required as a cofactor. Phosphorylated. Phosphorylation upon DNA damage induces relocalization to the nuclear plasma.

Its subcellular location is the nucleus. It is found in the nucleolus. The protein resides in the nucleoplasm. The protein localises to the mitochondrion. Its function is as follows. Structure-specific nuclease with 5'-flap endonuclease and 5'-3' exonuclease activities involved in DNA replication and repair. During DNA replication, cleaves the 5'-overhanging flap structure that is generated by displacement synthesis when DNA polymerase encounters the 5'-end of a downstream Okazaki fragment. It enters the flap from the 5'-end and then tracks to cleave the flap base, leaving a nick for ligation. Also involved in the long patch base excision repair (LP-BER) pathway, by cleaving within the apurinic/apyrimidinic (AP) site-terminated flap. Acts as a genome stabilization factor that prevents flaps from equilibrating into structures that lead to duplications and deletions. Also possesses 5'-3' exonuclease activity on nicked or gapped double-stranded DNA, and exhibits RNase H activity. Also involved in replication and repair of rDNA and in repairing mitochondrial DNA. The sequence is that of Flap endonuclease 1 from Tetrahymena thermophila (strain SB210).